Consider the following 68-residue polypeptide: MGKILLALIRLYQRFSRYTPPSCIYTPTCSHYGYQAIAKYGAFKGTWLTLKRIARCHPWAQGGEDPVP.

It belongs to the UPF0161 family.

The protein resides in the cell membrane. In terms of biological role, could be involved in insertion of integral membrane proteins into the membrane. In Herpetosiphon aurantiacus (strain ATCC 23779 / DSM 785 / 114-95), this protein is Putative membrane protein insertion efficiency factor.